The primary structure comprises 450 residues: Tubulin beta-2 chain (450 aa).

Residues glutamine 11, glutamate 69, serine 138, glycine 142, threonine 143, glycine 144, asparagine 204, and asparagine 226 each contribute to the GTP site. Glutamate 69 is a Mg(2+) binding site. The tract at residues 428 to 450 (ATAEDDVDGYAEGEAGETYESEQ) is disordered. The span at 429–450 (TAEDDVDGYAEGEAGETYESEQ) shows a compositional bias: acidic residues.

Belongs to the tubulin family. Dimer of alpha and beta chains. A typical microtubule is a hollow water-filled tube with an outer diameter of 25 nm and an inner diameter of 15 nm. Alpha-beta heterodimers associate head-to-tail to form protofilaments running lengthwise along the microtubule wall with the beta-tubulin subunit facing the microtubule plus end conferring a structural polarity. Microtubules usually have 13 protofilaments but different protofilament numbers can be found in some organisms and specialized cells. It depends on Mg(2+) as a cofactor. Cleaved by caspase ced-3 in vitro.

It is found in the cytoplasm. It localises to the cytoskeleton. Tubulin is the major constituent of microtubules, a cylinder consisting of laterally associated linear protofilaments composed of alpha- and beta-tubulin heterodimers. Microtubules grow by the addition of GTP-tubulin dimers to the microtubule end, where a stabilizing cap forms. Below the cap, tubulin dimers are in GDP-bound state, owing to GTPase activity of alpha-tubulin. Required for the normal dynamic behavior of the non-centrosomal microtubules in the epidermal syncytium. Involved in the redistribution of microtubule end-binding protein EB1/ebp-2 caused by wounding. Required to modulate expression in the epidermis of antimicrobial peptides, such as nlp-29, after wounding, or fungal infection. The polypeptide is Tubulin beta-2 chain (tbb-2) (Caenorhabditis elegans).